The sequence spans 420 residues: Probable ABC transporter-binding protein DR_1438 (420 aa).

The N-terminal stretch at 1-24 (MKKFAAVLGLTVAFAAASQAHAVT) is a signal peptide.

It belongs to the bacterial solute-binding protein 1 family.

Probably part of a binding-protein-dependent transport system. The chain is Probable ABC transporter-binding protein DR_1438 from Deinococcus radiodurans (strain ATCC 13939 / DSM 20539 / JCM 16871 / CCUG 27074 / LMG 4051 / NBRC 15346 / NCIMB 9279 / VKM B-1422 / R1).